The sequence spans 330 residues: Aspartate--ammonia ligase (330 aa).

Belongs to the class-II aminoacyl-tRNA synthetase family. AsnA subfamily.

The protein localises to the cytoplasm. The catalysed reaction is L-aspartate + NH4(+) + ATP = L-asparagine + AMP + diphosphate + H(+). It participates in amino-acid biosynthesis; L-asparagine biosynthesis; L-asparagine from L-aspartate (ammonia route): step 1/1. The polypeptide is Aspartate--ammonia ligase (Cronobacter sakazakii (strain ATCC BAA-894) (Enterobacter sakazakii)).